A 129-amino-acid polypeptide reads, in one-letter code: Small ribosomal subunit protein uS11 (129 aa).

The protein belongs to the universal ribosomal protein uS11 family. Part of the 30S ribosomal subunit. Interacts with proteins S7 and S18. Binds to IF-3.

Functionally, located on the platform of the 30S subunit, it bridges several disparate RNA helices of the 16S rRNA. Forms part of the Shine-Dalgarno cleft in the 70S ribosome. The polypeptide is Small ribosomal subunit protein uS11 (Xanthobacter autotrophicus (strain ATCC BAA-1158 / Py2)).